Reading from the N-terminus, the 423-residue chain is UDP-N-acetylglucosamine 1-carboxyvinyltransferase 1 (423 aa).

Residue 23–24 (KN) coordinates phosphoenolpyruvate. Residue R96 participates in UDP-N-acetyl-alpha-D-glucosamine binding. C120 acts as the Proton donor in catalysis. C120 carries the 2-(S-cysteinyl)pyruvic acid O-phosphothioketal modification. Residues 125 to 129 (RPIDL), D309, and V331 each bind UDP-N-acetyl-alpha-D-glucosamine.

The protein belongs to the EPSP synthase family. MurA subfamily.

Its subcellular location is the cytoplasm. The enzyme catalyses phosphoenolpyruvate + UDP-N-acetyl-alpha-D-glucosamine = UDP-N-acetyl-3-O-(1-carboxyvinyl)-alpha-D-glucosamine + phosphate. It functions in the pathway cell wall biogenesis; peptidoglycan biosynthesis. In terms of biological role, cell wall formation. Adds enolpyruvyl to UDP-N-acetylglucosamine. In Streptococcus thermophilus (strain ATCC BAA-250 / LMG 18311), this protein is UDP-N-acetylglucosamine 1-carboxyvinyltransferase 1.